The sequence spans 260 residues: E3 ubiquitin-protein ligase SRFP1 (260 aa).

Residues 11–80 form a CHY-type zinc finger; the sequence is FGRMGFGCKH…VAQVCYNCGV (70 aa). Positions 18, 20, 31, 32, 38, 41, 42, 50, 62, 65, 75, 78, 87, 90, 103, 104, 107, 110, 120, 121, 124, 127, 136, and 138 each coordinate Zn(2+). The CTCHY-type zinc-finger motif lies at 82–146; that stretch reads MGEYFCSACK…CCIENSMKNN (65 aa). The RING-type; atypical zinc finger occupies 147-190; sequence CPICYEYLFDSLRETSVLRCGHTMHLQCFHEMLKHDKFSCPICS.

In terms of tissue distribution, expressed in roots, leaves, nodes and panicles.

It localises to the nucleus. Its subcellular location is the cytoplasm. The catalysed reaction is S-ubiquitinyl-[E2 ubiquitin-conjugating enzyme]-L-cysteine + [acceptor protein]-L-lysine = [E2 ubiquitin-conjugating enzyme]-L-cysteine + N(6)-ubiquitinyl-[acceptor protein]-L-lysine.. It functions in the pathway protein modification; protein ubiquitination. Possesses E3 ubiquitin-protein ligase activity in vitro. Possesses transactivation activity in yeast cells. May modulate abiotic stress responses by negatively regulating antioxidant enzymes-mediated reactive oxygen species (ROS) removal. This Oryza sativa subsp. japonica (Rice) protein is E3 ubiquitin-protein ligase SRFP1.